Reading from the N-terminus, the 274-residue chain is NH(3)-dependent NAD(+) synthetase (274 aa).

46–53 (GISGGQDS) provides a ligand contact to ATP. Mg(2+) is bound at residue Asp52. Arg140 lines the deamido-NAD(+) pocket. Thr160 is a binding site for ATP. Glu165 contacts Mg(2+). Lys173 and Asp180 together coordinate deamido-NAD(+). ATP is bound by residues Lys189 and Thr211. 260-261 (HK) provides a ligand contact to deamido-NAD(+).

The protein belongs to the NAD synthetase family. In terms of assembly, homodimer.

The enzyme catalyses deamido-NAD(+) + NH4(+) + ATP = AMP + diphosphate + NAD(+) + H(+). It functions in the pathway cofactor biosynthesis; NAD(+) biosynthesis; NAD(+) from deamido-NAD(+) (ammonia route): step 1/1. In terms of biological role, catalyzes the ATP-dependent amidation of deamido-NAD to form NAD. Uses ammonia as a nitrogen source. In Streptococcus pneumoniae (strain Hungary19A-6), this protein is NH(3)-dependent NAD(+) synthetase.